The primary structure comprises 210 residues: Na(+)-translocating NADH-quinone reductase subunit D (210 aa).

The next 6 helical transmembrane spans lie at 14–34, 42–62, 72–92, 103–123, 131–151, and 178–198; these read PIVS…ALAV, LVMT…ISIL, IIVQ…VLQA, VFVG…AYAM, FMDG…VGFI, and NGLL…IWII.

The protein belongs to the NqrDE/RnfAE family. As to quaternary structure, composed of six subunits; NqrA, NqrB, NqrC, NqrD, NqrE and NqrF.

It localises to the cell inner membrane. The catalysed reaction is a ubiquinone + n Na(+)(in) + NADH + H(+) = a ubiquinol + n Na(+)(out) + NAD(+). Functionally, NQR complex catalyzes the reduction of ubiquinone-1 to ubiquinol by two successive reactions, coupled with the transport of Na(+) ions from the cytoplasm to the periplasm. NqrA to NqrE are probably involved in the second step, the conversion of ubisemiquinone to ubiquinol. In Shewanella halifaxensis (strain HAW-EB4), this protein is Na(+)-translocating NADH-quinone reductase subunit D.